The following is a 191-amino-acid chain: 3-isopropylmalate dehydratase small subunit (191 aa).

The protein belongs to the LeuD family. LeuD type 1 subfamily. Heterodimer of LeuC and LeuD.

It carries out the reaction (2R,3S)-3-isopropylmalate = (2S)-2-isopropylmalate. The protein operates within amino-acid biosynthesis; L-leucine biosynthesis; L-leucine from 3-methyl-2-oxobutanoate: step 2/4. Catalyzes the isomerization between 2-isopropylmalate and 3-isopropylmalate, via the formation of 2-isopropylmaleate. The chain is 3-isopropylmalate dehydratase small subunit from Staphylococcus haemolyticus (strain JCSC1435).